A 452-amino-acid polypeptide reads, in one-letter code: UDP-N-acetylmuramoylalanine--D-glutamate ligase (452 aa).

ATP is bound at residue 119–125; it reads GSNGKTT.

It belongs to the MurCDEF family.

It localises to the cytoplasm. It catalyses the reaction UDP-N-acetyl-alpha-D-muramoyl-L-alanine + D-glutamate + ATP = UDP-N-acetyl-alpha-D-muramoyl-L-alanyl-D-glutamate + ADP + phosphate + H(+). It functions in the pathway cell wall biogenesis; peptidoglycan biosynthesis. Its function is as follows. Cell wall formation. Catalyzes the addition of glutamate to the nucleotide precursor UDP-N-acetylmuramoyl-L-alanine (UMA). This chain is UDP-N-acetylmuramoylalanine--D-glutamate ligase, found in Streptococcus pyogenes serotype M2 (strain MGAS10270).